A 467-amino-acid polypeptide reads, in one-letter code: MVDMESPLCPLSPLEAEDLESPLSEYFLQEMGTIQDISRSLGEDSSGSFGFPEYQYLGSGPGSDGSVITDTLSPASSPSSVSYPEVPCGVDEPPSSALNIECRICGDKASGYHYGVHACEGCKGFFRRTIRLKLVYDKCDRSCKIQKKNRNKCQYCRFHKCLSVGMSHNAIRFGRMPRSEKAKLKAEVLTCDRDSEGAETADLKSLAKRIYEAYLKNFHMNKVKARIILAGKTSSHPLFVIHDMETLCTAEKTLMAKVVSDGIRDKEAEVRIFHCCQCVSVETVTNLTEFAKAIPGFASLDLNDQVTLLKYGVYEAIFTMLSSTMNKDGMLVAYGHGFITREFLKNLRKPFCDMMEPKFNFAMKFNALELDDSDISLFVAAIICCGDRPGLLNIDHIEKMQEAIVHVLKLHLQSNHPDDTFLFPKLLQKLADLRQLVTEHAQLVQVIKTESDAALHPLLQEIYRDMY.

The nuclear receptor DNA-binding region spans 99–173 (NIECRICGDK…VGMSHNAIRF (75 aa)). 2 NR C4-type zinc fingers span residues 102-122 (CRIC…CEGC) and 139-161 (CDRS…FHKC). In terms of domain architecture, NR LBD spans 239 to 466 (FVIHDMETLC…PLLQEIYRDM (228 aa)). Positions 304-433 (DQVTLLKYGV…PKLLQKLADL (130 aa)) are required for heterodimerization with RXRA.

It belongs to the nuclear hormone receptor family. NR1 subfamily. In terms of assembly, heterodimer; with RXRA. This heterodimerization is required for DNA binding and transactivation activity. Interacts with NCOA3 coactivator. Interacts with CITED2; the interaction stimulates its transcriptional activity. Also interacts with PPARBP in vitro. Interacts with AKAP13, LPIN1, PRDM16 and coactivator NCOA6. Interacts with ASXL1 and ASXL2. Interacts with PER2. Interacts with SIRT1; the interaction seems to be modulated by NAD(+) levels. Interacts with CRY1 and CRY2. In hepatocytes, interacts with PAQR3 and HUWE1; the interactions promote PPARA poylubiquitination and HUWE1-mediated degradation. Ubiquitinated by E3 ubiquitin-protein ligase HUWE1; leading to proteasomal degradation. In terms of processing, phosphorylated.

Its subcellular location is the nucleus. Its function is as follows. Ligand-activated transcription factor. Key regulator of lipid metabolism. Activated by the endogenous ligand 1-palmitoyl-2-oleoyl-sn-glycerol-3-phosphocholine (16:0/18:1-GPC). Activated by oleylethanolamide, a naturally occurring lipid that regulates satiety. Receptor for peroxisome proliferators such as hypolipidemic drugs and fatty acids. Regulates the peroxisomal beta-oxidation pathway of fatty acids. Functions as a transcription activator for the ACOX1 and P450 genes. Transactivation activity requires heterodimerization with RXRA and is antagonized by NR2C2. May be required for the propagation of clock information to metabolic pathways regulated by PER2. The polypeptide is Peroxisome proliferator-activated receptor alpha (PPARA) (Cavia porcellus (Guinea pig)).